The sequence spans 251 residues: DNA repair protein RecO (251 aa).

This sequence belongs to the RecO family.

In terms of biological role, involved in DNA repair and RecF pathway recombination. The sequence is that of DNA repair protein RecO from Albidiferax ferrireducens (strain ATCC BAA-621 / DSM 15236 / T118) (Rhodoferax ferrireducens).